Consider the following 406-residue polypeptide: Peptidase T (406 aa).

Zn(2+) is bound at residue H78. Residue D80 is part of the active site. Residue D139 coordinates Zn(2+). Catalysis depends on E173, which acts as the Proton acceptor. Residues E174, D196, and H378 each coordinate Zn(2+).

Belongs to the peptidase M20B family. It depends on Zn(2+) as a cofactor.

It localises to the cytoplasm. It carries out the reaction Release of the N-terminal residue from a tripeptide.. Cleaves the N-terminal amino acid of tripeptides. The sequence is that of Peptidase T from Clostridium perfringens (strain 13 / Type A).